The sequence spans 447 residues: UDP-N-acetylmuramate--L-alanine ligase (447 aa).

Residue 108 to 114 participates in ATP binding; it reads GSHGKTS.

Belongs to the MurCDEF family.

Its subcellular location is the cytoplasm. The enzyme catalyses UDP-N-acetyl-alpha-D-muramate + L-alanine + ATP = UDP-N-acetyl-alpha-D-muramoyl-L-alanine + ADP + phosphate + H(+). It participates in cell wall biogenesis; peptidoglycan biosynthesis. Its function is as follows. Cell wall formation. The sequence is that of UDP-N-acetylmuramate--L-alanine ligase from Listeria monocytogenes serotype 4b (strain F2365).